The chain runs to 502 residues: Membrane protein insertase YidC (502 aa).

Helical transmembrane passes span 12–32 (FLIFTILMFLFITAYELFYIY), 286–306 (LDWGTLKIIVKPLFLFLYWIY), 312–332 (WVLSILVLTFIVRIFLFPLGY), 382–402 (LPILLQIPIFFALYKVLIITV), 409–429 (FLWIPSLADKDPYYILPVIMG), and 452–472 (ITSVAFTLLFINFPAGLVLYW).

The protein belongs to the OXA1/ALB3/YidC family. Type 1 subfamily. Interacts with the Sec translocase complex via SecD. Specifically interacts with transmembrane segments of nascent integral membrane proteins during membrane integration.

Its subcellular location is the cell membrane. Functionally, required for the insertion and/or proper folding and/or complex formation of integral membrane proteins into the membrane. Involved in integration of membrane proteins that insert both dependently and independently of the Sec translocase complex, as well as at least some lipoproteins. Aids folding of multispanning membrane proteins. The polypeptide is Membrane protein insertase YidC (Aquifex aeolicus (strain VF5)).